We begin with the raw amino-acid sequence, 335 residues long: Meiotic expression up-regulated protein 14 (335 aa).

It is found in the cytoplasm. The protein resides in the cytoskeleton. It localises to the microtubule organizing center. The protein localises to the spindle pole body. Its subcellular location is the nucleus membrane. It is found in the prospore membrane. Has a role in nuclear division during meiosis II where it stabilizes the proper segregation of the spindle pole bodies. Also has a role in the formation and extension of the forespore membrane. This is Meiotic expression up-regulated protein 14 (meu14) from Schizosaccharomyces pombe (strain 972 / ATCC 24843) (Fission yeast).